A 61-amino-acid polypeptide reads, in one-letter code: Weak toxin CM-1c (61 aa).

Cystine bridges form between C3-C21, C14-C37, C41-C53, and C54-C59.

It belongs to the three-finger toxin family. Short-chain subfamily. Orphan group VI sub-subfamily. In terms of tissue distribution, expressed by the venom gland.

Its subcellular location is the secreted. The polypeptide is Weak toxin CM-1c (Hemachatus haemachatus (Rinkhals)).